The following is a 29-amino-acid chain: Cuticle protein 36 (29 aa).

Component of the cuticle of migratory locust which contains more than 100 different structural proteins. The polypeptide is Cuticle protein 36 (Locusta migratoria (Migratory locust)).